The sequence spans 315 residues: COMPASS component SWD3 (315 aa).

WD repeat units follow at residues 53–93, 94–133, 136–178, 187–228, 238–278, and 285–315; these read SHAR…HTFI, GHTAPVISLTFNRKGNLLFTSSMDESIKIWDTLNGSLMKT, AHSE…KTLT, NGVV…RTFQ, HHSC…LLQL, and HHSSPVMSIHCFGNIMCSLALNGDCCLWRWV.

Component of the Set1C/COMPASS complex which consists of SET1(2), BRE2(2), SPP1(2), SDC1(1), SHG1(1), SWD1(1), SWD2(1), and SWD3(1).

The protein localises to the nucleus. The protein resides in the chromosome. It localises to the telomere. Functionally, the COMPASS (Set1C) complex specifically mono-, di- and trimethylates histone H3 to form H3K4me1/2/3, which subsequently plays a role in telomere length maintenance and transcription elongation regulation. COMPASS recognizes ubiquitinated H2B on one face of the nucleosome which stimulates the methylation of H3 on the opposing face. SWD3/CPS30 establishes COMPASS trimethylation activity and may also serve as the anchor point to properly tether and space the other subunits. In Saccharomyces cerevisiae (strain ATCC 204508 / S288c) (Baker's yeast), this protein is COMPASS component SWD3.